The primary structure comprises 130 residues: Albumin-1 D (130 aa).

Positions 1–26 (MASVKLASLIVLFATLGMFLTKNVGA) are cleaved as a signal peptide. Disulfide bonds link Cys29–Cys46, Cys33–Cys48, and Cys41–Cys58. 2 consecutive propeptides follow at residues 64-69 (VFLKAN) and 123-130 (LLKSVSTA).

Post-translationally, the C-terminal glycine may be removed from PA1b. Major component of both the cotyledons and embryonic axes of mature seeds.

Functionally, PA1b binds to basic 7S globulin (BG) and stimulates its phosphorylation activity. Involved in the signal transduction system to regulate the growth and differentiation as a hormone peptide. Toxic to various insects through binding to a high affinity binding site in the insect gut. This chain is Albumin-1 D, found in Pisum sativum (Garden pea).